The primary structure comprises 402 residues: Rubredoxin-oxygen oxidoreductase (402 aa).

Residues proline 30–glycine 216 are zinc metallo-hydrolase. Histidine 79, glutamate 81, aspartate 83, histidine 146, aspartate 165, and histidine 226 together coordinate Fe cation. Positions valine 255–alanine 393 constitute a Flavodoxin-like domain.

It in the N-terminal section; belongs to the zinc metallo-hydrolase group 3 family. In terms of assembly, homodimer. FMN serves as cofactor. Requires Fe cation as cofactor.

It participates in energy metabolism; electron transfer. Functionally, catalyzes the four-electron reduction of one oxygen molecule to two water molecules. This Megalodesulfovibrio gigas (strain ATCC 19364 / DSM 1382 / NCIMB 9332 / VKM B-1759) (Desulfovibrio gigas) protein is Rubredoxin-oxygen oxidoreductase (roo).